Consider the following 311-residue polypeptide: MDISVEFSGHKLANVLMNASGIHCMTIKEMDELAASQAGAFVAKTATPNPRQGNEEPRYFDTPLGSINSMGLPNLGIDYYLDYQIARQKEFPEELRFLSVSGMNYEENIAILKKVQESEYTGVTEFNLSCPNLPGKPQIAYDFELTEKLLTEVFQFFTKPLGVKLPPFFDIAHFDAMAEILNKFPLVYVNSINSIGNGLYIDSDKEEVVIKPKGGFGGLGGEYVKPTALANVRAFAQRLKPEIKIIGTGGITCGKDVFEHLLCGATLVQVGTQLHQEGPQVFERLAKELQEIMAAKGYESIEEFRGKLKEM.

Residues Ser20 and 44-45 (KT) contribute to the FMN site. Substrate contacts are provided by residues Lys44, 68-72 (NSMGL), and Asn127. Asn127 contacts FMN. Cys130 serves as the catalytic Nucleophile. 2 residues coordinate FMN: Lys164 and Ile192. 193-194 (NS) provides a ligand contact to substrate. FMN contacts are provided by residues Gly221, 249 to 250 (GG), and 271 to 272 (GT).

Belongs to the dihydroorotate dehydrogenase family. Type 1 subfamily. As to quaternary structure, homodimer. It depends on FMN as a cofactor.

The protein localises to the cytoplasm. It carries out the reaction (S)-dihydroorotate + fumarate = orotate + succinate. The protein operates within pyrimidine metabolism; UMP biosynthesis via de novo pathway. Its function is as follows. Catalyzes the conversion of dihydroorotate to orotate with fumarate as the electron acceptor. The sequence is that of Probable dihydroorotate dehydrogenase A (fumarate) (pyrDA) from Enterococcus faecalis (strain ATCC 700802 / V583).